A 348-amino-acid polypeptide reads, in one-letter code: VIP36-like protein (348 aa).

A signal peptide spans 1–38 (MAVALGPSGWWQRWRRRLSAREVSRMLLLLLLLGSGQG). Residues 39 to 313 (PRQVGAGQTF…APLPPLSGLA (275 aa)) are Lumenal-facing. The L-type lectin-like domain occupies 49 to 274 (EYLKREHSLS…DVISLKLFEL (226 aa)). Serine 93 and aspartate 128 together coordinate a carbohydrate. Ca(2+) contacts are provided by aspartate 159, tyrosine 161, and asparagine 163. Positions 161 and 163 each coordinate a carbohydrate. The N-linked (GlcNAc...) asparagine glycan is linked to asparagine 181. Histidine 188 contributes to the a carbohydrate binding site. Aspartate 191 serves as a coordination point for Ca(2+). Cysteine 200 and cysteine 237 are oxidised to a cystine. 258-260 (GDL) lines the a carbohydrate pocket. The helical transmembrane segment at 314-334 (LFLIVFFSLVFSVFAIVIGII) threads the bilayer. Residues 335–348 (LYNKWQDQSRKRFY) lie on the Cytoplasmic side of the membrane. An Endoplasmic reticulum retention signal motif is present at residues 344-346 (RKR).

Its subcellular location is the endoplasmic reticulum membrane. It localises to the golgi apparatus membrane. In terms of biological role, may be involved in the regulation of export from the endoplasmic reticulum of a subset of glycoproteins. May function as a regulator of ERGIC-53. The chain is VIP36-like protein (LMAN2L) from Bos taurus (Bovine).